We begin with the raw amino-acid sequence, 497 residues long: SPI-2 type 3 secretion system secretin (497 aa).

The N-terminal stretch at 1–20 (MVVNKRLILILLFILNTAKS) is a signal peptide.

It belongs to the bacterial secretin family. T3SS SctC subfamily. As to quaternary structure, the core secretion machinery of the T3SS is composed of approximately 20 different proteins, including cytoplasmic components, a base, an export apparatus and a needle. This subunit is part of the base, which anchors the injectisome in the bacterial cell envelope. Forms a stable homooligomeric complex.

Its subcellular location is the cell outer membrane. Component of the type III secretion system (T3SS), also called injectisome, which is used to inject bacterial effector proteins into eukaryotic host cells. Forms a ring-shaped multimeric structure with an apparent central pore in the outer membrane. Required for secretion of some type III-secreted effectors including the SpvB exotoxin. In Salmonella typhimurium (strain 14028s / SGSC 2262), this protein is SPI-2 type 3 secretion system secretin.